Reading from the N-terminus, the 415-residue chain is Gamma-glutamyl phosphate reductase (415 aa).

Belongs to the gamma-glutamyl phosphate reductase family.

It is found in the cytoplasm. It catalyses the reaction L-glutamate 5-semialdehyde + phosphate + NADP(+) = L-glutamyl 5-phosphate + NADPH + H(+). It participates in amino-acid biosynthesis; L-proline biosynthesis; L-glutamate 5-semialdehyde from L-glutamate: step 2/2. Its function is as follows. Catalyzes the NADPH-dependent reduction of L-glutamate 5-phosphate into L-glutamate 5-semialdehyde and phosphate. The product spontaneously undergoes cyclization to form 1-pyrroline-5-carboxylate. In Bacillus cereus (strain ZK / E33L), this protein is Gamma-glutamyl phosphate reductase.